The primary structure comprises 718 residues: Peroxisomal bifunctional enzyme (718 aa).

The tract at residues 1 to 280 is enoyl-CoA hydratase / isomerase; sequence MAEYLRLPHS…FAEKSANKWS (280 aa). Position 38 is an N6-succinyllysine (K38). G99 contacts substrate. N6-acetyllysine; alternate occurs at positions 163 and 172. N6-succinyllysine; alternate occurs at positions 163 and 172. An N6-succinyllysine modification is found at K181. N6-acetyllysine; alternate occurs at positions 189 and 217. Residues K189 and K217 each carry the N6-succinyllysine; alternate modification. Residue K240 is modified to N6-succinyllysine. The residue at position 248 (K248) is an N6-acetyllysine. K252 carries the N6-succinyllysine modification. K274 carries the N6-acetyllysine; alternate modification. The residue at position 274 (K274) is an N6-succinyllysine; alternate. Residues K278, K288, and K329 each carry the N6-succinyllysine modification. Residues 281–567 are 3-hydroxyacyl-CoA dehydrogenase; the sequence is TPSGASWKTA…DMLCEAGRFG (287 aa). N6-acetyllysine occurs at positions 344, 348, 355, and 459. Residue K527 is modified to N6-succinyllysine. T543 is modified (phosphothreonine). K572 bears the N6-succinyllysine mark. Residues K579, K586, and K705 each carry the N6-acetyllysine; alternate modification. Residues K579, K586, and K705 each carry the N6-succinyllysine; alternate modification. The short motif at 716–718 is the Microbody targeting signal element; sequence SKL. At K717 the chain carries N6-succinyllysine.

This sequence in the N-terminal section; belongs to the enoyl-CoA hydratase/isomerase family. It in the C-terminal section; belongs to the 3-hydroxyacyl-CoA dehydrogenase family. Monomer. Post-translationally, acetylated, leading to enhanced enzyme activity. Acetylation is enhanced by up to 80% after treatment either with trichostin A (TCA) or with nicotinamide (NAM) with highest increase on Lys-344. Acetylation and enzyme activity increased by about 1.5% on addition of fatty acids.

Its subcellular location is the peroxisome. It carries out the reaction a (3S)-3-hydroxyacyl-CoA = a (2E)-enoyl-CoA + H2O. It catalyses the reaction a 4-saturated-(3S)-3-hydroxyacyl-CoA = a (3E)-enoyl-CoA + H2O. The enzyme catalyses a (3Z)-enoyl-CoA = a 4-saturated (2E)-enoyl-CoA. The catalysed reaction is a (3E)-enoyl-CoA = a 4-saturated (2E)-enoyl-CoA. It carries out the reaction a (3S)-3-hydroxyacyl-CoA + NAD(+) = a 3-oxoacyl-CoA + NADH + H(+). It catalyses the reaction (2S,3S)-3-hydroxy-2-methylbutanoyl-CoA = (2E)-2-methylbut-2-enoyl-CoA + H2O. The enzyme catalyses (2E)-dodecenedioyl-CoA + H2O = (3S)-hydroxydodecanedioyl-CoA. The catalysed reaction is (3S)-hydroxydodecanedioyl-CoA + NAD(+) = 3-oxododecanedioyl-CoA + NADH + H(+). It carries out the reaction (2E)-octenedioyl-CoA + H2O = (3S)-hydroxyoctanedioyl-CoA. It catalyses the reaction (3S)-hydroxyoctanedioyl-CoA + NAD(+) = 3-oxooctanedioyl-CoA + NADH + H(+). The enzyme catalyses (2E)-decenedioyl-CoA + H2O = (3S)-hydroxydecanedioyl-CoA. The catalysed reaction is (3S)-hydroxydecanedioyl-CoA + NAD(+) = 3-oxodecanedioyl-CoA + NADH + H(+). It carries out the reaction (2E)-tetradecenedioyl-CoA + H2O = (3S)-hydroxytetradecanedioyl-CoA. It catalyses the reaction (3S)-hydroxytetradecanedioyl-CoA + NAD(+) = 3-oxotetradecanedioyl-CoA + NADH + H(+). The enzyme catalyses (3E,5Z)-tetradecadienoyl-CoA = (2E,5Z)-tetradecadienoyl-CoA. The catalysed reaction is (3E,5Z)-octadienoyl-CoA = (2E,5Z)-octadienoyl-CoA. It carries out the reaction (3S)-hydroxydecanoyl-CoA + NAD(+) = 3-oxodecanoyl-CoA + NADH + H(+). It catalyses the reaction (3E)-decenoyl-CoA = (2E)-decenoyl-CoA. The enzyme catalyses (3Z)-hexenoyl-CoA = (2E)-hexenoyl-CoA. The catalysed reaction is (3E)-hexenoyl-CoA = (2E)-hexenoyl-CoA. It carries out the reaction (3S)-hydroxydecanoyl-CoA = (2E)-decenoyl-CoA + H2O. It catalyses the reaction (3S)-hydroxyhexanoyl-CoA = (2E)-hexenoyl-CoA + H2O. The enzyme catalyses (3S)-hydroxyhexadecanoyl-CoA + NAD(+) = 3-oxohexadecanoyl-CoA + NADH + H(+). The catalysed reaction is (3S)-hydroxyhexadecanoyl-CoA = (2E)-hexadecenoyl-CoA + H2O. It carries out the reaction (2E)-hexadecenedioyl-CoA + H2O = (3S)-hydroxyhexadecanedioyl-CoA. It catalyses the reaction (3S)-hydroxyhexadecanedioyl-CoA + NAD(+) = 3-oxohexadecanedioyl-CoA + NADH + H(+). It functions in the pathway lipid metabolism; fatty acid beta-oxidation. With respect to regulation, enzyme activity enhanced by acetylation. Peroxisomal trifunctional enzyme possessing 2-enoyl-CoA hydratase, 3-hydroxyacyl-CoA dehydrogenase, and delta 3, delta 2-enoyl-CoA isomerase activities. Catalyzes two of the four reactions of the long chain fatty acids peroxisomal beta-oxidation pathway. Can also use branched-chain fatty acids such as 2-methyl-2E-butenoyl-CoA as a substrate, which is hydrated into (2S,3S)-3-hydroxy-2-methylbutanoyl-CoA. Optimal isomerase for 2,5 double bonds into 3,5 form isomerization in a range of enoyl-CoA species. Also able to isomerize both 3-cis and 3-trans double bonds into the 2-trans form in a range of enoyl-CoA species. With HSD17B4, catalyzes the hydration of trans-2-enoyl-CoA and the dehydrogenation of 3-hydroxyacyl-CoA, but with opposite chiral specificity. Regulates the amount of medium-chain dicarboxylic fatty acids which are essential regulators of all fatty acid oxidation pathways. Also involved in the degradation of long-chain dicarboxylic acids through peroxisomal beta-oxidation. In Mus musculus (Mouse), this protein is Peroxisomal bifunctional enzyme.